The sequence spans 217 residues: Trichothecene biosynthesis transcription regulator TRI6 (217 aa).

The segment at 185-215 adopts a C2H2-type zinc-finger fold; that stretch reads VRCPWHDQEGQQCLRVFSRVDNMRDHYRRIH.

It localises to the nucleus. Its function is as follows. Transcriptional activator of part of the core trichothecene biosynthesis cluster. The chain is Trichothecene biosynthesis transcription regulator TRI6 from Fusarium sporotrichioides.